A 72-amino-acid polypeptide reads, in one-letter code: Cytochrome c oxidase copper chaperone 2 (72 aa).

Residues Cys-32 and Cys-33 each coordinate Cu cation. A CHCH domain is found at 32 to 72; the sequence is CCACPDTKKLRDECIVEHGESACTKWIEAHILCLRSEGFKV. 2 consecutive short sequence motifs (cx9C motif) follow at residues 35-45 and 54-64; these read CPDTKKLRDEC and CTKWIEAHILC. 2 disulfide bridges follow: Cys-35/Cys-64 and Cys-45/Cys-54.

It belongs to the COX17 family.

Its subcellular location is the mitochondrion intermembrane space. Its function is as follows. Copper chaperone for cytochrome c oxidase (COX). Binds 2 copper ions and delivers them to the Cu(A) site of COX. This Arabidopsis thaliana (Mouse-ear cress) protein is Cytochrome c oxidase copper chaperone 2 (COX17-2).